Consider the following 489-residue polypeptide: Zinc finger protein 58 (489 aa).

The 72-residue stretch at 2 to 73 (LSFWDVAIDF…KRQAAAAVHP (72 aa)) folds into the KRAB domain. A C2H2-type 1; degenerate zinc finger spans residues 78–100 (NKCKDFSKAFFCKSLLTQHQRIR). C2H2-type zinc fingers lie at residues 106–128 (FKCEECGKAFNNRSNLSEHKRIH), 134–156 (YKCEECGKAFRIRSKLSTHQRVH), 162–184 (YKCEECGKAFNSHSNLSEHKRIH), 190–212 (YKCEECGKAFSTRSTYYRHQKNH), 218–240 (YKCEECAKEFSYPSLLKVHQRIH), 246–268 (YKCEECGKPFYCPLLLKKHQIIH), 274–296 (YKCAECGKAFHYPSLLKRHQRIH), 302–324 (CKCKDCDRAFYSSAFLKRHQRIH), 330–352 (YKCGECGKRFCSFPHLQYHQRFH), 358–380 (YKCEQCGKTFSTLSYLPWHKLRH), 386–408 (YKCEKCGKMFYSTLDLKKHQKIH), 410–432 (YKCGECHYGFPNYAALTAHQRVH), 438–460 (HVCEQCGKDFSRIDSLNQHQLVH), and 466–488 (YKCEKCGKCFYRSSSLKRHQGIH).

The protein belongs to the krueppel C2H2-type zinc-finger protein family. Expressed in liver, testis and, at considerably lower levels, in brain, spleen and heart.

The protein localises to the nucleus. In terms of biological role, may have a role during differentiation processes. The sequence is that of Zinc finger protein 58 (Zfp58) from Mus musculus (Mouse).